Consider the following 507-residue polypeptide: Beta-glucosidase 3 (507 aa).

An N-terminal signal peptide occupies residues 1–23 (MELTLSLLTIFLLFFALSGRCSD). Position 41 (Q41) interacts with a beta-D-glucoside. N64 carries N-linked (GlcNAc...) asparagine glycosylation. Residues H138 and 183 to 184 (NE) each bind a beta-D-glucoside. E184 (proton donor) is an active-site residue. C203 and C210 are disulfide-bonded. 2 N-linked (GlcNAc...) asparagine glycosylation sites follow: N209 and N214. A beta-D-glucoside is bound at residue Y326. N-linked (GlcNAc...) asparagine glycosylation is present at N361. E394 is an a beta-D-glucoside binding site. E394 functions as the Nucleophile in the catalytic mechanism. A glycan (N-linked (GlcNAc...) asparagine) is linked at N429. A beta-D-glucoside-binding residues include W439 and F455. N-linked (GlcNAc...) asparagine glycans are attached at residues N461, N485, and N500.

This sequence belongs to the glycosyl hydrolase 1 family.

It catalyses the reaction Hydrolysis of terminal, non-reducing beta-D-glucosyl residues with release of beta-D-glucose.. This is Beta-glucosidase 3 from Arabidopsis thaliana (Mouse-ear cress).